We begin with the raw amino-acid sequence, 223 residues long: MNILIFGPNGSGKGTQGALVKKKYDLAHIESGAIFRQHIGGGTELGKKAKEYIDRGDLVPDDITIPMVLETLKGAGPNGWLLDGFPRNMVQAQKLWDALQAEGLKLDYVIEILLPREVAKNRIMGRRLCKNDNNHPNNIFIDAIKPDGDVCRVCGGSLSARADDQDEGAIGKRHDIYYNTEDGTLAAAYFYKDLAAKGVTKYIELDGEGSIDSIKDTLLKQLA.

10–15 (GSGKGT) provides a ligand contact to ATP. The tract at residues 30–59 (ESGAIFRQHIGGGTELGKKAKEYIDRGDLV) is NMP. AMP-binding positions include serine 31, arginine 36, 57–59 (DLV), 84–87 (GFPR), and glutamine 91. The tract at residues 125–164 (GRRLCKNDNNHPNNIFIDAIKPDGDVCRVCGGSLSARADD) is LID. Arginine 126 contacts ATP. AMP-binding residues include arginine 161 and arginine 173. Residue glycine 209 coordinates ATP.

This sequence belongs to the adenylate kinase family. As to quaternary structure, monomer.

Its subcellular location is the cytoplasm. It catalyses the reaction AMP + ATP = 2 ADP. It functions in the pathway purine metabolism; AMP biosynthesis via salvage pathway; AMP from ADP: step 1/1. In terms of biological role, catalyzes the reversible transfer of the terminal phosphate group between ATP and AMP. Plays an important role in cellular energy homeostasis and in adenine nucleotide metabolism. This chain is Adenylate kinase, found in Nitratidesulfovibrio vulgaris (strain DSM 19637 / Miyazaki F) (Desulfovibrio vulgaris).